The primary structure comprises 236 residues: Small ribosomal subunit protein uS2c (236 aa).

It belongs to the universal ribosomal protein uS2 family.

Its subcellular location is the plastid. The protein resides in the chloroplast. This chain is Small ribosomal subunit protein uS2c (rps2), found in Manihot esculenta (Cassava).